We begin with the raw amino-acid sequence, 259 residues long: Virion protein US10 homolog (259 aa).

A zinc finger lies at 162-174 (CAHWCCLGHAFGC).

It belongs to the herpesviridae US10 family. In terms of processing, phosphorylated.

The protein localises to the virion tegument. The protein resides in the host nucleus matrix. The polypeptide is Virion protein US10 homolog (Equine herpesvirus 4 (strain 1942) (EHV-4)).